Here is a 714-residue protein sequence, read N- to C-terminus: MEYKFSTVVDPGTYETHGLCEGYEVRYHKNAELEDIGCLRCQEHWRQSVGPLGAFKGTLGNPFNLLSLVIPECLPDRLSIVGFANELAFIHDDVTDIVQYGDAHNNDFKEAFNSMATTGSMENAASGKRALQAYIAREMVRIDKERAIPTIKAWAKFVDYGGRQETTRFTSEKEYTEYRIQDIGLWFWYGLLSFAMALDVPEHEREMCHEVCRTAYVQIMLVHDLASWEKEKLNAAALGKDVITNIIFVLMEEHGISEEEAKERCRETAKTLAADYLKIVEEYKARDDISLDSRKYIESWLYTISGNTVWSFICPRYNSSGSFSDHQLELMKNGVPKDPASGSTNGTSNGTSNGTSHVAVNGNGHVTNDDLSANGIKTDGELLSAITMEHLKNRNSFKLGDHDQEVKSLHGHGQALDPRVLQAPYEYITALPSKGLREQAIDALNVWFRVPTAKLEIIKSITTILHNASLMLDDVEDGSELRRGKPATHNIFGLGQTINSANYQLVRALQELQKLGDARSLLVFTEELHNLYVGQSMDLYWTSNLVCPSMHEYFQMIEHKTGGLFRLFGRLMAVHSTNPVQVDLTDFTNHLGRYFQTRDDYQNLVSAEYTKQKGFCEDFEEGKFSLPMIHLMQTMPDNLVLRNVWTQRRVNGTATHGQKQTILNLMKEAGTLKFTQDSLGVLYSDVEKSVAELESKFGIENFQLRLIMELLKTG.

Positions 1 to 325 (MEYKFSTVVD…RYNSSGSFSD (325 aa)) are stellata-2,6,19-trien synthase. Mg(2+) is bound by residues Asp92 and Asp96. The DDXXD motif 1 signature appears at 92-96 (DDVTD). The NSE motif motif lies at 276–284 (YLKIVEEYK). Residues 326–713 (HQLELMKNGV…LRLIMELLKT (388 aa)) are geranylgeranyl diphosphate synthase. Positions 332 to 356 (KNGVPKDPASGSTNGTSNGTSNGTS) are disordered. The segment covering 341 to 356 (SGSTNGTSNGTSNGTS) has biased composition (low complexity). Isopentenyl diphosphate contacts are provided by Lys434, Arg437, and His466. Residues Asp473 and Asp477 each coordinate Mg(2+). The DDXXD motif 2 motif lies at 473 to 477 (DDVED). Arg482 is a dimethylallyl diphosphate binding site. An isopentenyl diphosphate-binding site is contributed by Arg483. Dimethylallyl diphosphate-binding residues include Lys560, Thr561, Gln596, Asn603, Lys613, and Lys623.

The protein in the N-terminal section; belongs to the terpene synthase family. In the C-terminal section; belongs to the FPP/GGPP synthase family. As to quaternary structure, hexamer.

It carries out the reaction 4 isopentenyl diphosphate + dimethylallyl diphosphate = (2E,6E,10E,14E)-geranylfarnesyl diphosphate + 4 diphosphate. It catalyses the reaction (2E,6E,10E,14E)-geranylfarnesyl diphosphate = stellata-2,6,19-triene + diphosphate. It functions in the pathway secondary metabolite biosynthesis; terpenoid biosynthesis. In terms of biological role, multifunctional diterpene synthase; part of the gene cluster that mediates the biosynthesis of the sesterterpene stellatic acid. The first step in the pathway is performed by the stellatatriene synthase that possesses both prenyl transferase and terpene cyclase activity, converting isopentenyl diphosphate and dimethylallyl diphosphate into geranylgeranyl diphosphate (GGDP) and then converting GGDP into stellata-2,6,19-triene. The cytochrome P450 monooxygenase Stl-P450 then catalyzes three successive oxidation reactions on the C-20 methyl group to generate the carboxylic acid of stellatic acid. This is Stellatatriene synthase from Emericella variicolor (Aspergillus stellatus).